The sequence spans 149 residues: Transcriptional repressor NrdR (149 aa).

A zinc finger lies at 3-34; sequence CPFCFAVDTKVIDSRLVGEGSSVRRRRQCLVC. The ATP-cone domain occupies 49-139; it reads PRVVKSNDVR…VYRSFEDIKE (91 aa).

It belongs to the NrdR family. It depends on Zn(2+) as a cofactor.

In terms of biological role, negatively regulates transcription of bacterial ribonucleotide reductase nrd genes and operons by binding to NrdR-boxes. The protein is Transcriptional repressor NrdR of Shigella flexneri.